Reading from the N-terminus, the 674-residue chain is 1,4-alpha-glucan branching enzyme GlgB 1 (674 aa).

D336 acts as the Nucleophile in catalysis. E389 acts as the Proton donor in catalysis.

It belongs to the glycosyl hydrolase 13 family. GlgB subfamily. In terms of assembly, monomer.

The enzyme catalyses Transfers a segment of a (1-&gt;4)-alpha-D-glucan chain to a primary hydroxy group in a similar glucan chain.. It participates in glycan biosynthesis; glycogen biosynthesis. Catalyzes the formation of the alpha-1,6-glucosidic linkages in glycogen by scission of a 1,4-alpha-linked oligosaccharide from growing alpha-1,4-glucan chains and the subsequent attachment of the oligosaccharide to the alpha-1,6 position. This is 1,4-alpha-glucan branching enzyme GlgB 1 (glgB1) from Clostridium perfringens (strain 13 / Type A).